Consider the following 773-residue polypeptide: Cadherin-5 (773 aa).

Positions 1-18 (MKKLILLFSLFLAPAFSY) are cleaved as a signal peptide. A propeptide spanning residues 19 to 40 (KENQKINQNFSSNNTSHKRLKR) is cleaved from the precursor. Asparagine 27, asparagine 31, and asparagine 32 each carry an N-linked (GlcNAc...) asparagine glycan. Cadherin domains follow at residues 39 to 144 (KRDW…APIF), 145 to 251 (VQKI…FPVF), 252 to 366 (KHPS…PPVF), 367 to 474 (TKLS…APEL), and 474 to 582 (LVYP…DFTF). At 41–595 (DWIWNRMHIR…RAKQVGVSVQ (555 aa)) the chain is on the extracellular side. Glutamate 51, glutamate 52, aspartate 102, and glutamate 104 together coordinate Ca(2+). N-linked (GlcNAc...) asparagine glycosylation is present at asparagine 121. Ca(2+) is bound by residues aspartate 136, isoleucine 137, asparagine 138, aspartate 139, and asparagine 140. Asparagine 150 is a glycosylation site (N-linked (GlcNAc...) asparagine). Aspartate 170, aspartate 172, histidine 179, and aspartate 224 together coordinate Ca(2+). N-linked (GlcNAc...) asparagine glycans are attached at residues asparagine 263, asparagine 437, asparagine 519, and asparagine 531. A helical transmembrane segment spans residues 596 to 617 (ALVAIFICIFTIIAVIALLILL). The Cytoplasmic segment spans residues 618–773 (RKRHKKDLSG…GSEPNEDFVY (156 aa)).

N-glycosylated. In terms of processing, O-glycosylated.

It is found in the cell junction. The protein localises to the adherens junction. The protein resides in the cell membrane. Its subcellular location is the cytoplasm. Cadherins are calcium-dependent cell adhesion proteins. They preferentially interact with themselves in a homophilic manner in connecting cells; cadherins may thus contribute to the sorting of heterogeneous cell types. This cadherin may play a important role in endothelial cell biology through control of the cohesion and organization of the intercellular junctions. Plays a role in coupling actin fibers to cell junctions in endothelial cells. Associates with CTNND1/p120-catenin to control CADH5 endocytosis. This Gallus gallus (Chicken) protein is Cadherin-5.